Consider the following 296-residue polypeptide: 4-hydroxy-tetrahydrodipicolinate synthase (296 aa).

Position 46 (Thr-46) interacts with pyruvate. Tyr-134 acts as the Proton donor/acceptor in catalysis. Lys-162 serves as the catalytic Schiff-base intermediate with substrate. Residue Ile-204 coordinates pyruvate.

This sequence belongs to the DapA family. As to quaternary structure, homotetramer; dimer of dimers.

The protein localises to the cytoplasm. The enzyme catalyses L-aspartate 4-semialdehyde + pyruvate = (2S,4S)-4-hydroxy-2,3,4,5-tetrahydrodipicolinate + H2O + H(+). It functions in the pathway amino-acid biosynthesis; L-lysine biosynthesis via DAP pathway; (S)-tetrahydrodipicolinate from L-aspartate: step 3/4. Catalyzes the condensation of (S)-aspartate-beta-semialdehyde [(S)-ASA] and pyruvate to 4-hydroxy-tetrahydrodipicolinate (HTPA). The polypeptide is 4-hydroxy-tetrahydrodipicolinate synthase (Clostridium novyi (strain NT)).